The primary structure comprises 194 residues: MRFCFFFCFTASIFCTTGNSSDIVFCCAHTPCLLHLEVDQETSVTWIDSNTGQIPLCLSNGTCHISEKGLHFSANFSKDGLYIAIINETNYHAAEHYYLVYIYENCHQMPYDSPRHTGHKGTSFNWSMGLWLVKCSHNKTFFLPFVLDSAKSAPIIMTETAITIYISMIFLIVSLLTFLNVLITLNNKYKHYGV.

Asn-19, Asn-60, Asn-75, Asn-87, Asn-125, and Asn-138 each carry an N-linked (GlcNAc...) asparagine; by host glycan.

This Canine adenovirus serotype 1 (strain RI261) (CAdV-1) protein is Early E3 22.1 kDa glycoprotein.